We begin with the raw amino-acid sequence, 264 residues long: Thymidylate synthase (264 aa).

DUMP is bound at residue R21. H51 contacts (6R)-5,10-methylene-5,6,7,8-tetrahydrofolate. 126 to 127 (RR) contacts dUMP. The Nucleophile role is filled by C146. DUMP-binding positions include 166–169 (RSAD), N177, and 207–209 (HLY). A (6R)-5,10-methylene-5,6,7,8-tetrahydrofolate-binding site is contributed by D169. A263 is a binding site for (6R)-5,10-methylene-5,6,7,8-tetrahydrofolate.

It belongs to the thymidylate synthase family. Bacterial-type ThyA subfamily. In terms of assembly, homodimer.

The protein localises to the cytoplasm. The catalysed reaction is dUMP + (6R)-5,10-methylene-5,6,7,8-tetrahydrofolate = 7,8-dihydrofolate + dTMP. Its pathway is pyrimidine metabolism; dTTP biosynthesis. Functionally, catalyzes the reductive methylation of 2'-deoxyuridine-5'-monophosphate (dUMP) to 2'-deoxythymidine-5'-monophosphate (dTMP) while utilizing 5,10-methylenetetrahydrofolate (mTHF) as the methyl donor and reductant in the reaction, yielding dihydrofolate (DHF) as a by-product. This enzymatic reaction provides an intracellular de novo source of dTMP, an essential precursor for DNA biosynthesis. The polypeptide is Thymidylate synthase (Rhizobium etli (strain ATCC 51251 / DSM 11541 / JCM 21823 / NBRC 15573 / CFN 42)).